The chain runs to 224 residues: Heme response regulator HssR (224 aa).

One can recognise a Response regulatory domain in the interval 3-116 (QCLVVDDDPR…ELIFRIRAVL (114 aa)). Position 52 is a 4-aspartylphosphate (D52). Positions 124 to 222 (NSEMTIGNLT…VRGQGYKVEN (99 aa)) form a DNA-binding region, ompR/PhoB-type.

Phosphorylated by HssS.

The protein resides in the cytoplasm. Functionally, member of the two-component regulatory system HssS/HssR involved in intracellular heme homeostasis and tempering of staphylococcal virulence. Phosphorylated HssR binds to a direct repeat sequence within hrtAB promoter and activates the expression of hrtAB, an efflux pump, in response to extracellular heme, hemin, hemoglobin or blood. The sequence is that of Heme response regulator HssR (hssR) from Staphylococcus aureus (strain MRSA252).